A 264-amino-acid chain; its full sequence is Zearalenone hydrolase (264 aa).

An AB hydrolase-1 domain is found at Val27 to Pro207. Residues Gly32, Ser102, and Ser103 each contribute to the zearalenone site. Residue Ser102 is part of the active site. The active site involves Glu126. Positions 183, 187, 220, and 242 each coordinate zearalenone. The active site involves His242.

This sequence belongs to the AB hydrolase superfamily. Hydrolase RutD family. In terms of assembly, homodimer.

It catalyses the reaction zearalenone + H2O = hydrolyzed zearalenone + H(+). Functionally, lactonohydrolase that specifically hydrolyzes and deactivates the mycotoxin zearalenone (ZEN) and its zearalenol (ZOL) derivatives. ZHD101 prefers ZEN to ZOL as its substrate, but ZOL, especially the alpha-form, shows higher estrogenic toxicity than ZEN. In Bionectria ochroleuca (Gliocladium roseum), this protein is Zearalenone hydrolase.